The sequence spans 378 residues: Tetraacyldisaccharide 4'-kinase (378 aa).

Position 63 to 70 (63 to 70 (AVGGAGKT)) interacts with ATP.

It belongs to the LpxK family.

It carries out the reaction a lipid A disaccharide + ATP = a lipid IVA + ADP + H(+). It functions in the pathway glycolipid biosynthesis; lipid IV(A) biosynthesis; lipid IV(A) from (3R)-3-hydroxytetradecanoyl-[acyl-carrier-protein] and UDP-N-acetyl-alpha-D-glucosamine: step 6/6. Functionally, transfers the gamma-phosphate of ATP to the 4'-position of a tetraacyldisaccharide 1-phosphate intermediate (termed DS-1-P) to form tetraacyldisaccharide 1,4'-bis-phosphate (lipid IVA). The protein is Tetraacyldisaccharide 4'-kinase of Anaeromyxobacter sp. (strain K).